An 87-amino-acid polypeptide reads, in one-letter code: uncharacterized protein (87 aa).

A helical transmembrane segment spans residues G48–F70.

It localises to the host membrane. This is an uncharacterized protein from Gallid herpesvirus 2 (strain Chicken/Md5/ATCC VR-987) (GaHV-2).